A 122-amino-acid chain; its full sequence is Double-headed protease inhibitor, submandibular gland (122 aa).

Kazal-like domains follow at residues 10–70 (GGRK…KCDI) and 71–121 (ECPQ…QCQS). 6 disulfide bridges follow: Cys-16–Cys-50, Cys-28–Cys-47, Cys-36–Cys-68, Cys-72–Cys-101, Cys-79–Cys-98, and Cys-87–Cys-119.

It is found in the secreted. Functionally, this inhibitor is composed of two homologous actively inhibiting halves: one which inhibits trypsin, the other which inhibits elastase. The sequence is that of Double-headed protease inhibitor, submandibular gland from Mustela lutreola (European mink).